A 208-amino-acid polypeptide reads, in one-letter code: CKLF-like MARVEL transmembrane domain-containing protein 4 (208 aa).

The span at 1-11 (MRGGEELDGFE) shows a compositional bias: acidic residues. A disordered region spans residues 1–38 (MRGGEELDGFEGEASSTSMISGASSPYQPTTEPVSQRR). Residues 15-25 (SSTSMISGASS) are compositionally biased toward low complexity. One can recognise an MARVEL domain in the interval 49 to 176 (YLRGALGRLK…STFLAMQKWR (128 aa)). Helical transmembrane passes span 59 to 79 (VAQVILALIAFICIETIMECS), 85 to 105 (YFFEFVSCSAFVVTGVLLILF), 123 to 143 (LVNTGLSTFFFFIASIVLAAL), and 151 to 171 (IAAVIFGFLATAAYAVSTFLA). A Phosphoserine modification is found at Ser194.

This sequence belongs to the chemokine-like factor family. Interacts with PD1L1 and CMTM6.

It is found in the membrane. Acts as a backup for CMTM6 to regulate plasma membrane expression of PD-L1/CD274, an immune inhibitory ligand critical for immune tolerance to self and antitumor immunity. May protect PD-L1/CD274 from being polyubiquitinated and targeted for degradation. The sequence is that of CKLF-like MARVEL transmembrane domain-containing protein 4 from Mus musculus (Mouse).